A 241-amino-acid polypeptide reads, in one-letter code: Phosphoadenosine 5'-phosphosulfate reductase (241 aa).

C235 (nucleophile; cysteine thiosulfonate intermediate) is an active-site residue.

Belongs to the PAPS reductase family. CysH subfamily.

It localises to the cytoplasm. The catalysed reaction is [thioredoxin]-disulfide + sulfite + adenosine 3',5'-bisphosphate + 2 H(+) = [thioredoxin]-dithiol + 3'-phosphoadenylyl sulfate. It functions in the pathway sulfur metabolism; hydrogen sulfide biosynthesis; sulfite from sulfate: step 3/3. Its function is as follows. Catalyzes the formation of sulfite from phosphoadenosine 5'-phosphosulfate (PAPS) using thioredoxin as an electron donor. This Xanthomonas campestris pv. campestris (strain 8004) protein is Phosphoadenosine 5'-phosphosulfate reductase.